The chain runs to 648 residues: Probable alpha-galactosidase D (648 aa).

An N-terminal signal peptide occupies residues 1 to 17 (MESIVWLLLLSPALVAG). Asparagine 84 and asparagine 90 each carry an N-linked (GlcNAc...) asparagine glycan. Cysteine 123 and cysteine 156 are oxidised to a cystine. Catalysis depends on aspartate 154, which acts as the Nucleophile. Residue 199–203 (EWGID) participates in substrate binding. The active-site Proton donor is the aspartate 221. 3 N-linked (GlcNAc...) asparagine glycosylation sites follow: asparagine 339, asparagine 505, and asparagine 572.

It belongs to the glycosyl hydrolase 27 family.

The protein localises to the secreted. The catalysed reaction is Hydrolysis of terminal, non-reducing alpha-D-galactose residues in alpha-D-galactosides, including galactose oligosaccharides, galactomannans and galactolipids.. Its function is as follows. Hydrolyzes a variety of simple alpha-D-galactoside as well as more complex molecules such as oligosaccharides and polysaccharides. This Neosartorya fischeri (strain ATCC 1020 / DSM 3700 / CBS 544.65 / FGSC A1164 / JCM 1740 / NRRL 181 / WB 181) (Aspergillus fischerianus) protein is Probable alpha-galactosidase D (aglD).